The sequence spans 136 residues: Small ribosomal subunit protein eS17A (136 aa).

The protein belongs to the eukaryotic ribosomal protein eS17 family. Component of the small ribosomal subunit (SSU). Mature yeast ribosomes consist of a small (40S) and a large (60S) subunit. The 40S small subunit contains 1 molecule of ribosomal RNA (18S rRNA) and 33 different proteins (encoded by 57 genes). The large 60S subunit contains 3 rRNA molecules (25S, 5.8S and 5S rRNA) and 46 different proteins (encoded by 81 genes).

The protein resides in the cytoplasm. Component of the ribosome, a large ribonucleoprotein complex responsible for the synthesis of proteins in the cell. The small ribosomal subunit (SSU) binds messenger RNAs (mRNAs) and translates the encoded message by selecting cognate aminoacyl-transfer RNA (tRNA) molecules. The large subunit (LSU) contains the ribosomal catalytic site termed the peptidyl transferase center (PTC), which catalyzes the formation of peptide bonds, thereby polymerizing the amino acids delivered by tRNAs into a polypeptide chain. The nascent polypeptides leave the ribosome through a tunnel in the LSU and interact with protein factors that function in enzymatic processing, targeting, and the membrane insertion of nascent chains at the exit of the ribosomal tunnel. This chain is Small ribosomal subunit protein eS17A, found in Saccharomyces cerevisiae (strain ATCC 204508 / S288c) (Baker's yeast).